Reading from the N-terminus, the 315-residue chain is DNA-directed RNA polymerase subunit alpha (315 aa).

Positions 1 to 228 (MLEIEKPVIQ…EHFKLFMTLT (228 aa)) are alpha N-terminal domain (alpha-NTD). Residues 245-315 (KEKALEMTIE…LGLNLRLNDE (71 aa)) form an alpha C-terminal domain (alpha-CTD) region.

The protein belongs to the RNA polymerase alpha chain family. Homodimer. The RNAP catalytic core consists of 2 alpha, 1 beta, 1 beta' and 1 omega subunit. When a sigma factor is associated with the core the holoenzyme is formed, which can initiate transcription.

The catalysed reaction is RNA(n) + a ribonucleoside 5'-triphosphate = RNA(n+1) + diphosphate. In terms of biological role, DNA-dependent RNA polymerase catalyzes the transcription of DNA into RNA using the four ribonucleoside triphosphates as substrates. This is DNA-directed RNA polymerase subunit alpha from Clostridium perfringens (strain ATCC 13124 / DSM 756 / JCM 1290 / NCIMB 6125 / NCTC 8237 / Type A).